A 349-amino-acid chain; its full sequence is MSLIRSQAYTNAGVNINAGNALISNIKSFVSETNIQGVLSDLGGFGGLFKLNLTQVDNPVLVSSTDGVGTKLKFAFDFNKHDTVGIDLVAMCVNDILVQGARPLFFLDYFATSKLDVDKATQVIYGISEGCKQARCALLGGETAELPGMYTEGEYDLAGFCVGIVDQSKIIDGSSIKVGDTIIGLASSGIHSNGYSLVRQIINQCAIEPDNIIPGSRDTFKQVLLKPTFIYSDIICNLIKDISIKGMVHITGGGFYDNIPRVLPQSVVANIQFSSWDIPPIFYWLQEQGSLSWSEMLQVFNCGIGYVLIIPNDSVTRAMNILKSMEVSAWIIGSIEKQNVGDEQVIITY.

Belongs to the AIR synthase family.

It localises to the cytoplasm. The catalysed reaction is 2-formamido-N(1)-(5-O-phospho-beta-D-ribosyl)acetamidine + ATP = 5-amino-1-(5-phospho-beta-D-ribosyl)imidazole + ADP + phosphate + H(+). Its pathway is purine metabolism; IMP biosynthesis via de novo pathway; 5-amino-1-(5-phospho-D-ribosyl)imidazole from N(2)-formyl-N(1)-(5-phospho-D-ribosyl)glycinamide: step 2/2. The chain is Phosphoribosylformylglycinamidine cyclo-ligase from Lawsonia intracellularis (strain PHE/MN1-00).